The following is a 262-amino-acid chain: 1-(5-phosphoribosyl)-5-[(5-phosphoribosylamino)methylideneamino] imidazole-4-carboxamide isomerase (262 aa).

Aspartate 8 functions as the Proton acceptor in the catalytic mechanism. Aspartate 129 (proton donor) is an active-site residue. The tract at residues 243-262 (KDNVGQEDHSLPRCEPGPRG) is disordered.

This sequence belongs to the HisA/HisF family.

It localises to the cytoplasm. It catalyses the reaction 1-(5-phospho-beta-D-ribosyl)-5-[(5-phospho-beta-D-ribosylamino)methylideneamino]imidazole-4-carboxamide = 5-[(5-phospho-1-deoxy-D-ribulos-1-ylimino)methylamino]-1-(5-phospho-beta-D-ribosyl)imidazole-4-carboxamide. Its pathway is amino-acid biosynthesis; L-histidine biosynthesis; L-histidine from 5-phospho-alpha-D-ribose 1-diphosphate: step 4/9. The chain is 1-(5-phosphoribosyl)-5-[(5-phosphoribosylamino)methylideneamino] imidazole-4-carboxamide isomerase from Desulforudis audaxviator (strain MP104C).